A 764-amino-acid chain; its full sequence is Phosphoribosylformylglycinamidine synthase subunit PurL (764 aa).

The segment at 1 to 23 (MTQEVDTVERAAATPDHPQPYRE) is disordered. Histidine 57 is an active-site residue. Tyrosine 60 and lysine 104 together coordinate ATP. Glutamate 106 contributes to the Mg(2+) binding site. Substrate contacts are provided by residues 107–110 (SHNH) and arginine 129. Histidine 108 (proton acceptor) is an active-site residue. Residue aspartate 130 participates in Mg(2+) binding. Glutamine 258 is a substrate binding site. Position 286 (aspartate 286) interacts with Mg(2+). 330 to 332 (ESQ) lines the substrate pocket. ATP-binding residues include asparagine 518 and glycine 555. Asparagine 556 is a binding site for Mg(2+). Serine 558 provides a ligand contact to substrate.

This sequence belongs to the FGAMS family. As to quaternary structure, monomer. Part of the FGAM synthase complex composed of 1 PurL, 1 PurQ and 2 PurS subunits.

It localises to the cytoplasm. It carries out the reaction N(2)-formyl-N(1)-(5-phospho-beta-D-ribosyl)glycinamide + L-glutamine + ATP + H2O = 2-formamido-N(1)-(5-O-phospho-beta-D-ribosyl)acetamidine + L-glutamate + ADP + phosphate + H(+). Its pathway is purine metabolism; IMP biosynthesis via de novo pathway; 5-amino-1-(5-phospho-D-ribosyl)imidazole from N(2)-formyl-N(1)-(5-phospho-D-ribosyl)glycinamide: step 1/2. In terms of biological role, part of the phosphoribosylformylglycinamidine synthase complex involved in the purines biosynthetic pathway. Catalyzes the ATP-dependent conversion of formylglycinamide ribonucleotide (FGAR) and glutamine to yield formylglycinamidine ribonucleotide (FGAM) and glutamate. The FGAM synthase complex is composed of three subunits. PurQ produces an ammonia molecule by converting glutamine to glutamate. PurL transfers the ammonia molecule to FGAR to form FGAM in an ATP-dependent manner. PurS interacts with PurQ and PurL and is thought to assist in the transfer of the ammonia molecule from PurQ to PurL. In Mycolicibacterium vanbaalenii (strain DSM 7251 / JCM 13017 / BCRC 16820 / KCTC 9966 / NRRL B-24157 / PYR-1) (Mycobacterium vanbaalenii), this protein is Phosphoribosylformylglycinamidine synthase subunit PurL.